Consider the following 331-residue polypeptide: Small ribosomal subunit protein uS2 (331 aa).

This sequence belongs to the universal ribosomal protein uS2 family.

In Bradyrhizobium diazoefficiens (strain JCM 10833 / BCRC 13528 / IAM 13628 / NBRC 14792 / USDA 110), this protein is Small ribosomal subunit protein uS2.